A 458-amino-acid chain; its full sequence is Serine/threonine-protein kinase tricornered (458 aa).

Residues 92 to 389 (FEALKVIGRG…LEDLKSVPFF (298 aa)) form the Protein kinase domain. ATP-binding positions include 98–106 (IGRGAFGEV) and K121. The interval 118–179 (YAMKVLRKAD…EFLPGGDMMT (62 aa)) is interaction with mats and Mob1. The Proton acceptor role is filled by D215. S287 bears the Phosphoserine mark. The region spanning 390–458 (RGVDWEHIRE…YKRFEVRNLE (69 aa)) is the AGC-kinase C-terminal domain. T448 carries the post-translational modification Phosphothreonine.

This sequence belongs to the protein kinase superfamily. AGC Ser/Thr protein kinase family. As to quaternary structure, interacts with, and is activated by, Mob1. Requires Mg(2+) as cofactor.

The protein resides in the cytoplasm. It localises to the nucleus. The catalysed reaction is L-seryl-[protein] + ATP = O-phospho-L-seryl-[protein] + ADP + H(+). The enzyme catalyses L-threonyl-[protein] + ATP = O-phospho-L-threonyl-[protein] + ADP + H(+). Functionally, serine/threonine-protein kinase involved in controlling cell structure and proliferation of a variety of polarized outgrowths including epidermal hairs, bristles, arista laterals, and dendrites. Together with fry, maintains the integrity of epidermal hairs and is an essential component of the signaling pathway regulating dendritic branching of sensory neurons. Reduces neurite outgrowth by phosphorylating pav/pavarotti, thereby inhibiting its function in microtubule-microtubule sliding. This is Serine/threonine-protein kinase tricornered from Drosophila pseudoobscura pseudoobscura (Fruit fly).